Consider the following 343-residue polypeptide: Cytoplasmic tRNA 2-thiolation protein 1 (343 aa).

Belongs to the TtcA family. CTU1/NCS6/ATPBD3 subfamily.

It is found in the cytoplasm. Its pathway is tRNA modification; 5-methoxycarbonylmethyl-2-thiouridine-tRNA biosynthesis. Functionally, plays a central role in 2-thiolation of mcm(5)S(2)U at tRNA wobble positions of tRNA(Lys), tRNA(Glu) and tRNA(Gln). Directly binds tRNAs and probably acts by catalyzing adenylation of tRNAs, an intermediate required for 2-thiolation. It is unclear whether it acts as a sulfurtransferase that transfers sulfur from thiocarboxylated URM1 onto the uridine of tRNAs at wobble position. The sequence is that of Cytoplasmic tRNA 2-thiolation protein 1 from Drosophila ananassae (Fruit fly).